The following is a 143-amino-acid chain: Large ribosomal subunit protein uL15 (143 aa).

Composition is skewed to basic residues over residues 1–14 and 23–38; these read MIRK…KRGS and KKHR…GNAG. Residues 1 to 38 form a disordered region; sequence MIRKSKKITKKRGSRTCGYGEAKKHRGAGHRGGRGNAG.

Belongs to the universal ribosomal protein uL15 family. Part of the 50S ribosomal subunit.

Binds to the 23S rRNA. This chain is Large ribosomal subunit protein uL15, found in Methanococcus maripaludis (strain DSM 14266 / JCM 13030 / NBRC 101832 / S2 / LL).